The following is a 357-amino-acid chain: Serine proteinase inhibitor 1 (357 aa).

It belongs to the serpin family. Poxviruses subfamily.

It is found in the host cytoplasm. Functionally, this viral protein may be involved in the regulation of the complement cascade. Involved in red pock formation. The protein is Serine proteinase inhibitor 1 (SPI-1) of Oryctolagus cuniculus (Rabbit).